We begin with the raw amino-acid sequence, 361 residues long: RNA 3'-terminal phosphate cyclase (361 aa).

6 residues coordinate ATP: Q105, P132, Y295, D298, Q299, and H321. The active-site Tele-AMP-histidine intermediate is the H321.

This sequence belongs to the RNA 3'-terminal cyclase family. Type 1 subfamily.

The protein localises to the nucleus. Its subcellular location is the nucleoplasm. It catalyses the reaction a 3'-end 3'-phospho-ribonucleotide-RNA + ATP = a 3'-end 2',3'-cyclophospho-ribonucleotide-RNA + AMP + diphosphate. In terms of biological role, catalyzes the conversion of 3'-phosphate to a 2',3'-cyclic phosphodiester at the end of RNA. The mechanism of action of the enzyme occurs in 3 steps: (A) adenylation of the enzyme by ATP; (B) transfer of adenylate to an RNA-N3'P to produce RNA-N3'PP5'A; (C) and attack of the adjacent 2'-hydroxyl on the 3'-phosphorus in the diester linkage to produce the cyclic end product. Likely functions in some aspects of cellular RNA processing. Function plays an important role in a RNA repair and splicing pathway which controls axon regeneration in response to peripheral (PNS) and central nervous system (CNS) injury. In response to axotomy, negatively regulates splicing of Xbp1 which in turn activates downstream effectors which inhibit axon regeneration, including down-regulating the microtubule regulators ringer and futsch. The polypeptide is RNA 3'-terminal phosphate cyclase (Drosophila melanogaster (Fruit fly)).